Here is a 121-residue protein sequence, read N- to C-terminus: Large ribosomal subunit protein bL17 (121 aa).

Belongs to the bacterial ribosomal protein bL17 family. Part of the 50S ribosomal subunit. Contacts protein L32.

This Rubrobacter xylanophilus (strain DSM 9941 / JCM 11954 / NBRC 16129 / PRD-1) protein is Large ribosomal subunit protein bL17.